Reading from the N-terminus, the 73-residue chain is Frenatin 3.1 (73 aa).

An N-terminal signal peptide occupies residues 1–22; sequence MHFLKKSIFLVLFLGLVSLSIC. Positions 23–46 are excised as a propeptide; the sequence is EKEKREDQNEEEVDENEEASEEKR. The tract at residues 25-45 is disordered; it reads EKREDQNEEEVDENEEASEEK. Over residues 30–42 the composition is skewed to acidic residues; that stretch reads QNEEEVDENEEAS.

Expressed by the skin glands.

Its subcellular location is the secreted. Antimicrobial peptide with activity against both Gram-positive and Gram-negative bacteria. The chain is Frenatin 3.1 from Nyctimystes infrafrenatus (White-lipped tree frog).